Here is a 226-residue protein sequence, read N- to C-terminus: Protein AhpA (226 aa).

2 consecutive transmembrane segments (helical) span residues 12 to 32 (SMIS…LFGV) and 169 to 189 (GELI…HYFL).

It belongs to the Smp family.

It is found in the cell inner membrane. In terms of biological role, when anaerobically expressed in wild-type E.coli K12 confers a hemolytic phenotype, but not in an sheA mutant. Suggests it affects the expression of the latent E.coli K12 hemolysin sheA under anaerobic conditions. In Pasteurella multocida (strain Pm70), this protein is Protein AhpA (ahpA).